A 481-amino-acid polypeptide reads, in one-letter code: Aspartyl/glutamyl-tRNA(Asn/Gln) amidotransferase subunit B (481 aa).

Belongs to the GatB/GatE family. GatB subfamily. Heterotrimer of A, B and C subunits.

The enzyme catalyses L-glutamyl-tRNA(Gln) + L-glutamine + ATP + H2O = L-glutaminyl-tRNA(Gln) + L-glutamate + ADP + phosphate + H(+). It catalyses the reaction L-aspartyl-tRNA(Asn) + L-glutamine + ATP + H2O = L-asparaginyl-tRNA(Asn) + L-glutamate + ADP + phosphate + 2 H(+). Functionally, allows the formation of correctly charged Asn-tRNA(Asn) or Gln-tRNA(Gln) through the transamidation of misacylated Asp-tRNA(Asn) or Glu-tRNA(Gln) in organisms which lack either or both of asparaginyl-tRNA or glutaminyl-tRNA synthetases. The reaction takes place in the presence of glutamine and ATP through an activated phospho-Asp-tRNA(Asn) or phospho-Glu-tRNA(Gln). The polypeptide is Aspartyl/glutamyl-tRNA(Asn/Gln) amidotransferase subunit B (Marinomonas sp. (strain MWYL1)).